Here is a 345-residue protein sequence, read N- to C-terminus: Phosphoribosylformylglycinamidine cyclo-ligase (345 aa).

It belongs to the AIR synthase family.

It is found in the cytoplasm. The catalysed reaction is 2-formamido-N(1)-(5-O-phospho-beta-D-ribosyl)acetamidine + ATP = 5-amino-1-(5-phospho-beta-D-ribosyl)imidazole + ADP + phosphate + H(+). It functions in the pathway purine metabolism; IMP biosynthesis via de novo pathway; 5-amino-1-(5-phospho-D-ribosyl)imidazole from N(2)-formyl-N(1)-(5-phospho-D-ribosyl)glycinamide: step 2/2. The chain is Phosphoribosylformylglycinamidine cyclo-ligase from Escherichia coli (strain K12 / MC4100 / BW2952).